Consider the following 615-residue polypeptide: ABC transporter G family member 22 (615 aa).

In terms of domain architecture, ABC transporter spans 31 to 279 (ITFKDLAYSV…EIGFPFPDQT (249 aa)). 67-74 (GPSGSGKT) is a binding site for ATP. An ABC transmembrane type-2 domain is found at 364–610 (SNCLVRFAVA…TMVFLCLHYF (247 aa)). 6 consecutive transmembrane segments (helical) span residues 370 to 390 (FAVAVFVGLLFGACFSGLGMD), 400 to 420 (VLFYLVINMILQPFASISLFI), 442 to 462 (LALMFFEILACIGTAFILGTI), 477 to 497 (FFAMAILTLAHLAGDFFMLII), 508 to 528 (FAVGAGVATIYQLFAGFFVPI), and 587 to 607 (INLIIVSSFAFAFFTMVFLCL).

Belongs to the ABC transporter superfamily. ABCG family. Eye pigment precursor importer (TC 3.A.1.204) subfamily.

It localises to the membrane. In terms of biological role, may be involved in cell migration. In Dictyostelium discoideum (Social amoeba), this protein is ABC transporter G family member 22 (abcG22).